An 809-amino-acid polypeptide reads, in one-letter code: Pentatricopeptide repeat-containing protein At1g11290, chloroplastic (809 aa).

The transit peptide at 1-46 directs the protein to the chloroplast; sequence MSSQLVQFSTVPQIPNPPSRHRHFLSERNYIPANVYEHPAALLLER. PPR repeat units lie at residues 68–98, 99–133, 134–168, 169–199, 200–234, 235–269, 270–300, 301–335, 336–370, 371–401, 402–436, 437–471, 472–502, 503–537, 538–568, and 574–604; these read EHFFQTKLVSLFCRYGSVDEAARVFEPIDSK, LNVLYHTMLKGFAKVSDLDKALQFFVRMRYDDVEP, VVYNFTYLLKVCGDEAELRVGKEIHGLLVKSGFSL, DLFAMTGLENMYAKCRQVNEARKVFDRMPER, DLVSWNTIVAGYSQNGMARMALEMVKSMCEENLKP, SFITIVSVLPAVSALRLISVGKEIHGYAMRSGFDS, LVNISTALVDMYAKCGSLETARQLFDGMLER, NVVSWNSMIDAYVQNENPKEAMLIFQKMLDEGVKP, TDVSVMGALHACADLGDLERGRFIHKLSVELGLDR, NVSVVNSLISMYCKCKEVDTAASMFGKLQSR, TLVSWNAMILGFAQNGRPIDALNYFSQMRSRTVKP, DTFTYVSVITAIAELSITHHAKWIHGVVMRSCLDK, NVFVTTALVDMYAKCGAIMIARLIFDMMSER, HVTTWNAMIDGYGTHGFGKAALELFEEMQKGTIKP, NGVTFLSVISACSHSGLVEAGLKCFYMMKEN, and SMDHYGAMVDLLGRAGRLNEAWDFIMQMPVK. A type E motif region spans residues 609–684; the sequence is VYGAMLGACQ…TPGCSMVEIK (76 aa). The type E(+) motif stretch occupies residues 685 to 715; it reads NEVHSFFSGSTAHPDSKKIYAFLEKLICHIK. Positions 716 to 809 are type DYW motif; it reads EAGYVPDTNL…NGACSCGDYW (94 aa).

It belongs to the PPR family. PCMP-H subfamily.

The protein resides in the plastid. Its subcellular location is the chloroplast. Its function is as follows. Involved in multiple sites RNA editing events in chloroplasts. Involved in the editing of the site 7 of ndhB (ndhB-7) and site 5 of ndhD (ndhD-5) transcripts, which are two plastid-encoded subunits of the chloroplast NAD(P)H dehydrogenase (NDH) complex. Involved in the editing of the site 3 of rpoB (rpoB-3) transcript. Required for the activity of the NDH complex of the photosynthetic electron transport chain. Possesses low endoribonuclease activity in vitro. In Arabidopsis thaliana (Mouse-ear cress), this protein is Pentatricopeptide repeat-containing protein At1g11290, chloroplastic (PCMP-H40).